We begin with the raw amino-acid sequence, 426 residues long: MAATKPHINLAVIGHIDHGKSTLVGRLLFETGAVPAHIIEQYKKEAESKGKGTFEFAWVMDSLKEERERGITIDIAHRRFDTEKYYFTVVDCPGHRDFVKNMITGASQADAAILVCAAPDGVMQQTKEHIFLSKTLGINQLIIAVNKMDAINYDQKRYNEVKEEVSKILRMIGFKPDQIPFIPTSAFKGTNIAKHAEETPWYTGVTILEALNALKEPEKPTQLPLRVPIQDVYTISGIGLVPVGRVETGIMKKGDKVIFRPGIDGVGHAGEVKSIEMHHEEIPQALPGDNIGFNVRGIEKNLIRRGDVCGHVDKQPTVAVEFKAQVVVLQHPSAITAGYTPVFHCHTAQVACTLTQILATLDPKTGGVKEQNPPFIKTGDAAIVLIRPTRPLVIEKVKEIPQLGRFAIRDMGQTVAAGVVMDITPK.

In terms of domain architecture, tr-type G spans 5-221; the sequence is KPHINLAVIG…NALKEPEKPT (217 aa). The tract at residues 14-21 is G1; sequence GHIDHGKS. Position 14 to 21 (14 to 21) interacts with GTP; the sequence is GHIDHGKS. Ser-21 provides a ligand contact to Mg(2+). A G2 region spans residues 70-74; it reads GITID. The G3 stretch occupies residues 91–94; it reads DCPG. GTP is bound by residues 91–95 and 146–149; these read DCPGH and NKMD. A G4 region spans residues 146–149; sequence NKMD. Positions 185–187 are G5; that stretch reads SAF.

Belongs to the TRAFAC class translation factor GTPase superfamily. Classic translation factor GTPase family. EF-Tu/EF-1A subfamily.

Its subcellular location is the cytoplasm. It carries out the reaction GTP + H2O = GDP + phosphate + H(+). GTP hydrolase that promotes the GTP-dependent binding of aminoacyl-tRNA to the A-site of ribosomes during protein biosynthesis. The protein is Elongation factor 1-alpha of Methanocella arvoryzae (strain DSM 22066 / NBRC 105507 / MRE50).